Reading from the N-terminus, the 539-residue chain is CTP synthase (539 aa).

An amidoligase domain region spans residues 1-267; the sequence is MTKYIFVTGG…DQKVVDFLHI (267 aa). S13 contributes to the CTP binding site. S13 lines the UTP pocket. 14-19 is an ATP binding site; it reads SLGKGI. Y54 is a binding site for L-glutamine. An ATP-binding site is contributed by D71. The Mg(2+) site is built by D71 and E141. CTP-binding positions include 148-150, 188-193, and K224; these read DME and KSKPTQ. Residues 188–193 and K224 contribute to the UTP site; that span reads KSKPTQ. In terms of domain architecture, Glutamine amidotransferase type-1 spans 294-537; it reads KITLVGKYVE…IGAASGLQVD (244 aa). G356 contributes to the L-glutamine binding site. C383 functions as the Nucleophile; for glutamine hydrolysis in the catalytic mechanism. L-glutamine is bound by residues 384-387, E407, and R465; that span reads LGMQ. Catalysis depends on residues H510 and E512.

This sequence belongs to the CTP synthase family. As to quaternary structure, homotetramer.

It catalyses the reaction UTP + L-glutamine + ATP + H2O = CTP + L-glutamate + ADP + phosphate + 2 H(+). It carries out the reaction L-glutamine + H2O = L-glutamate + NH4(+). The enzyme catalyses UTP + NH4(+) + ATP = CTP + ADP + phosphate + 2 H(+). It participates in pyrimidine metabolism; CTP biosynthesis via de novo pathway; CTP from UDP: step 2/2. Allosterically activated by GTP, when glutamine is the substrate; GTP has no effect on the reaction when ammonia is the substrate. The allosteric effector GTP functions by stabilizing the protein conformation that binds the tetrahedral intermediate(s) formed during glutamine hydrolysis. Inhibited by the product CTP, via allosteric rather than competitive inhibition. Catalyzes the ATP-dependent amination of UTP to CTP with either L-glutamine or ammonia as the source of nitrogen. Regulates intracellular CTP levels through interactions with the four ribonucleotide triphosphates. This is CTP synthase from Lactobacillus delbrueckii subsp. bulgaricus (strain ATCC BAA-365 / Lb-18).